Here is a 106-residue protein sequence, read N- to C-terminus: UPF0060 membrane protein AZC_0909 (106 aa).

4 consecutive transmembrane segments (helical) span residues Pro-4–Val-24, Gly-27–Leu-47, Ala-58–Glu-78, and Arg-84–Pro-104.

It belongs to the UPF0060 family.

It localises to the cell inner membrane. This Azorhizobium caulinodans (strain ATCC 43989 / DSM 5975 / JCM 20966 / LMG 6465 / NBRC 14845 / NCIMB 13405 / ORS 571) protein is UPF0060 membrane protein AZC_0909.